The sequence spans 102 residues: Small ribosomal subunit protein uS10 (102 aa).

The protein belongs to the universal ribosomal protein uS10 family. As to quaternary structure, part of the 30S ribosomal subunit.

Involved in the binding of tRNA to the ribosomes. This chain is Small ribosomal subunit protein uS10, found in Acidithiobacillus ferrooxidans (strain ATCC 53993 / BNL-5-31) (Leptospirillum ferrooxidans (ATCC 53993)).